Reading from the N-terminus, the 190-residue chain is dTTP/UTP pyrophosphatase (190 aa).

The active-site Proton acceptor is the D68.

The protein belongs to the Maf family. YhdE subfamily. The cofactor is a divalent metal cation.

The protein resides in the cytoplasm. The enzyme catalyses dTTP + H2O = dTMP + diphosphate + H(+). It catalyses the reaction UTP + H2O = UMP + diphosphate + H(+). In terms of biological role, nucleoside triphosphate pyrophosphatase that hydrolyzes dTTP and UTP. May have a dual role in cell division arrest and in preventing the incorporation of modified nucleotides into cellular nucleic acids. This chain is dTTP/UTP pyrophosphatase, found in Acholeplasma laidlawii (strain PG-8A).